A 309-amino-acid polypeptide reads, in one-letter code: Replication factor C subunit 4 (309 aa).

Residues Val5, Val17, 42–50 (GPPGTGKTT), Asn134, and Arg192 contribute to the ATP site.

Belongs to the activator 1 small subunits family. In terms of assembly, component of the replication factor C (RFC) complex.

It is found in the nucleus. Its function is as follows. Component of ATP-dependent clamp loader (RFC and RFC-like) complexes for DNA clamps. During a clamp loading circle, the RFC:clamp complex binds to DNA and the recognition of the double-stranded/single-stranded junction stimulates ATP hydrolysis by RFC. The complex presumably provides bipartite ATP sites in which one subunit supplies a catalytic site for hydrolysis of ATP bound to the neighboring subunit. Dissociation of RFC from the clamp leaves the clamp encircling DNA. Component of the replication factor C (RFC or activator 1) complex which acts during elongation of primed DNA templates by DNA polymerase delta and epsilon. RFC has an essential but redundant activity in sister chromatid cohesion establishment. This chain is Replication factor C subunit 4 (RFC4), found in Encephalitozoon cuniculi (strain GB-M1) (Microsporidian parasite).